The chain runs to 150 residues: Ribosome-binding factor A (150 aa).

A disordered region spans residues 126–150; that stretch reads EVARDLSHDDDEDGGADEAPRNGDE.

This sequence belongs to the RbfA family. In terms of assembly, monomer. Binds 30S ribosomal subunits, but not 50S ribosomal subunits or 70S ribosomes.

It localises to the cytoplasm. Functionally, one of several proteins that assist in the late maturation steps of the functional core of the 30S ribosomal subunit. Associates with free 30S ribosomal subunits (but not with 30S subunits that are part of 70S ribosomes or polysomes). Required for efficient processing of 16S rRNA. May interact with the 5'-terminal helix region of 16S rRNA. The chain is Ribosome-binding factor A from Brucella abortus (strain S19).